We begin with the raw amino-acid sequence, 270 residues long: Peflin (270 aa).

The disordered stretch occupies residues 1 to 97 (MSYQYGQGYS…YRQQGSAGNV (97 aa)). 5 tandem repeats follow at residues 22–30 (PPRAPYAGG), 44–54 (PPGQQYGGGSP), 62–70 (GPRAPYGGG), 72–81 (APGGPYGGYG), and 83–91 (PQGGPYRQQ). The 5 X 9 AA approximate tandem repeat of [AP]-P-G-G-P-Y-G-G-P-P stretch occupies residues 22–91 (PPRAPYAGGP…QPQGGPYRQQ (70 aa)). Low complexity-rich tracts occupy residues 26-47 (PYAG…PPGQ) and 55-66 (YGSYGQPGPRAP). Positions 67 to 84 (YGGGQAPGGPYGGYGQPQ) are enriched in gly residues. 5 consecutive EF-hand domains span residues 100-135 (GVNP…FNNS), 141-169 (TCIM…WTFL), 170-202 (QQWR…MGYN), 203-239 (LSPQ…LQSM), and 240-269 (TQAF…ITRL). Residues aspartate 113, aspartate 115, serine 117, tyrosine 119, and glutamate 124 each contribute to the Ca(2+) site. The Ca(2+) site is built by aspartate 180, aspartate 182, serine 184, serine 186, and glutamate 191.

In terms of assembly, heterodimer; heterodimerizes (via the EF-hand 5) with pdcd6.

It localises to the cytoplasm. The protein localises to the endoplasmic reticulum. It is found in the membrane. The protein resides in the cytoplasmic vesicle. Its subcellular location is the COPII-coated vesicle membrane. Its function is as follows. Calcium-binding protein that acts as an adapter that bridges unrelated proteins or stabilizes weak protein-protein complexes in response to calcium. Acts as a negative regulator of ER-Golgi transport. The sequence is that of Peflin from Danio rerio (Zebrafish).